The chain runs to 498 residues: ATP synthase subunit alpha 1 (498 aa).

The protein belongs to the ATPase alpha/beta chains family. In terms of assembly, F-type ATPases have 2 components, CF(1) - the catalytic core - and CF(0) - the membrane proton channel. CF(1) has five subunits: alpha(3), beta(3), gamma(1), delta(1), epsilon(1). CF(0) has three main subunits: a(1), b(2) and c(9-12). The alpha and beta chains form an alternating ring which encloses part of the gamma chain. CF(1) is attached to CF(0) by a central stalk formed by the gamma and epsilon chains, while a peripheral stalk is formed by the delta and b chains.

The protein resides in the cell membrane. The enzyme catalyses ATP + H2O + 4 H(+)(in) = ADP + phosphate + 5 H(+)(out). In terms of biological role, produces ATP from ADP in the presence of a proton gradient across the membrane. The alpha chain is a regulatory subunit. This is ATP synthase subunit alpha 1 from Listeria monocytogenes serovar 1/2a (strain ATCC BAA-679 / EGD-e).